Consider the following 285-residue polypeptide: Glutamate racemase (285 aa).

Substrate contacts are provided by residues 30 to 31 and 62 to 63; these read DS and YG. Cys-94 (proton donor/acceptor) is an active-site residue. 95 to 96 is a binding site for substrate; the sequence is NT. The active-site Proton donor/acceptor is Cys-206. 207-208 serves as a coordination point for substrate; the sequence is TH.

This sequence belongs to the aspartate/glutamate racemases family.

It catalyses the reaction L-glutamate = D-glutamate. It functions in the pathway cell wall biogenesis; peptidoglycan biosynthesis. Provides the (R)-glutamate required for cell wall biosynthesis. This is Glutamate racemase from Pectobacterium carotovorum subsp. carotovorum (strain PC1).